The primary structure comprises 320 residues: Citrate synthase (320 aa).

Residues His249 and Asp307 contribute to the active site.

The protein belongs to the citrate synthase family.

The enzyme catalyses oxaloacetate + acetyl-CoA + H2O = citrate + CoA + H(+). It functions in the pathway carbohydrate metabolism; tricarboxylic acid cycle; isocitrate from oxaloacetate: step 1/2. In Bartonella doshiae, this protein is Citrate synthase (gltA).